A 372-amino-acid chain; its full sequence is Queuine tRNA-ribosyltransferase (372 aa).

Asp92 serves as the catalytic Proton acceptor. Residues 92–96 (DSGGY), Asp146, Gln188, and Gly215 contribute to the substrate site. The segment at 246 to 252 (GIGSLRE) is RNA binding. The Nucleophile role is filled by Asp265. The tract at residues 270 to 274 (TRLGR) is RNA binding; important for wobble base 34 recognition. 4 residues coordinate Zn(2+): Cys303, Cys305, Cys308, and His334.

It belongs to the queuine tRNA-ribosyltransferase family. In terms of assembly, homodimer. Within each dimer, one monomer is responsible for RNA recognition and catalysis, while the other monomer binds to the replacement base PreQ1. Zn(2+) serves as cofactor.

It catalyses the reaction 7-aminomethyl-7-carbaguanine + guanosine(34) in tRNA = 7-aminomethyl-7-carbaguanosine(34) in tRNA + guanine. The protein operates within tRNA modification; tRNA-queuosine biosynthesis. Its function is as follows. Catalyzes the base-exchange of a guanine (G) residue with the queuine precursor 7-aminomethyl-7-deazaguanine (PreQ1) at position 34 (anticodon wobble position) in tRNAs with GU(N) anticodons (tRNA-Asp, -Asn, -His and -Tyr). Catalysis occurs through a double-displacement mechanism. The nucleophile active site attacks the C1' of nucleotide 34 to detach the guanine base from the RNA, forming a covalent enzyme-RNA intermediate. The proton acceptor active site deprotonates the incoming PreQ1, allowing a nucleophilic attack on the C1' of the ribose to form the product. After dissociation, two additional enzymatic reactions on the tRNA convert PreQ1 to queuine (Q), resulting in the hypermodified nucleoside queuosine (7-(((4,5-cis-dihydroxy-2-cyclopenten-1-yl)amino)methyl)-7-deazaguanosine). This is Queuine tRNA-ribosyltransferase from Prochlorococcus marinus (strain MIT 9215).